A 491-amino-acid polypeptide reads, in one-letter code: MEFSLLLLLAFLAGLLLLLFRGHPKAHGRLPPGPSPLPVLGNLLQMDRKGLLRSFLRLREKYGDVFTVYLGSRPVVVLCGTDAIREALVDQAEAFSGRGKIAVVDPIFQGYGVIFANGERWRALRRFSLATMRDFGMGKRSVEERIQEEARCLVEELRKSKGALLDNTLLFHSITSNIICSIVFGKRFDYKDPVFLRLLDLFFQSFSLISSFSSQVFELFPGFLKHFPGTHRQIYRNLQEINTFIGQSVEKHRATLDPSNPRDFIDVYLLRMEKDKSDPSSEFHHQNLILTVLSLFFAGTETTSTTLRYGFLLMLKYPHVTERVQKEIEQVIGSHRPPALDDRAKMPYTDAVIHEIQRLGDLIPFGVPHTVTKDTQFRGYVIPKNTEVFPVLSSALHDPRYFETPNTFNPGHFLDANGALKRNEGFMPFSLGKRICLGEGIARTELFLFFTTILQNFSIASPVPPEDIDLTPRESGVGNVPPSYQIRFLAR.

Ser128 bears the Phosphoserine; by PKA mark. Residue Cys436 coordinates heme.

The protein belongs to the cytochrome P450 family. Heme serves as cofactor.

The protein resides in the endoplasmic reticulum membrane. It localises to the microsome membrane. It carries out the reaction an organic molecule + reduced [NADPH--hemoprotein reductase] + O2 = an alcohol + oxidized [NADPH--hemoprotein reductase] + H2O + H(+). Its function is as follows. Cytochromes P450 are a group of heme-thiolate monooxygenases. In liver microsomes, this enzyme is involved in an NADPH-dependent electron transport pathway. It oxidizes a variety of structurally unrelated compounds, including steroids, fatty acids, and xenobiotics. In the epoxidation of arachidonic acid it has a unique preference for the 5,6-olefin. The protein is Cytochrome P450 2B4 (CYP2B4) of Oryctolagus cuniculus (Rabbit).